The following is a 433-amino-acid chain: Serine hydroxymethyltransferase (433 aa).

A (6S)-5,6,7,8-tetrahydrofolate-binding site is contributed by 121–123 (AHV). Lys227 carries the post-translational modification N6-(pyridoxal phosphate)lysine. Residue Glu243 coordinates (6S)-5,6,7,8-tetrahydrofolate.

This sequence belongs to the SHMT family. Homodimer. Requires pyridoxal 5'-phosphate as cofactor.

The protein localises to the cytoplasm. The protein operates within amino-acid biosynthesis; glycine biosynthesis; glycine from L-serine: step 1/1. In terms of biological role, catalyzes the reversible interconversion of serine and glycine with a modified folate serving as the one-carbon carrier. Also exhibits a pteridine-independent aldolase activity toward beta-hydroxyamino acids, producing glycine and aldehydes, via a retro-aldol mechanism. This is Serine hydroxymethyltransferase from Saccharolobus islandicus (strain M.14.25 / Kamchatka #1) (Sulfolobus islandicus).